Reading from the N-terminus, the 283-residue chain is Urease accessory protein UreD (283 aa).

Residues 1 to 21 are disordered; the sequence is MTQTQPVGTLRLTIDDQGPQG.

Belongs to the UreD family. UreD, UreF and UreG form a complex that acts as a GTP-hydrolysis-dependent molecular chaperone, activating the urease apoprotein by helping to assemble the nickel containing metallocenter of UreC. The UreE protein probably delivers the nickel.

The protein localises to the cytoplasm. Probably acts in the maturation of urease via the functional incorporation of the urease nickel metallocenter. Required for urease expression. This chain is Urease accessory protein UreD, found in Corynebacterium glutamicum (strain ATCC 13032 / DSM 20300 / JCM 1318 / BCRC 11384 / CCUG 27702 / LMG 3730 / NBRC 12168 / NCIMB 10025 / NRRL B-2784 / 534).